The primary structure comprises 99 residues: Protein SPIRAL1-like 5 (99 aa).

The span at 1–12 (MSRGGSFGGGQS) shows a compositional bias: gly residues. The disordered stretch occupies residues 1–99 (MSRGGSFGGG…SSLGYLFGDK (99 aa)). Residues 27 to 39 (TPAPPVAPKPAPP) show a composition bias toward pro residues. The segment covering 56–73 (KISNNNYQRVQGQNSGNF) has biased composition (polar residues). The residue at position 58 (Ser-58) is a Phosphoserine.

The protein belongs to the SPIRAL1 family. Expressed exclusively in stems and flowers.

Its function is as follows. Acts redundantly with SPR1 in maintaining the cortical microtubules organization essential for anisotropic cell growth. In Arabidopsis thaliana (Mouse-ear cress), this protein is Protein SPIRAL1-like 5 (SP1L5).